Here is a 459-residue protein sequence, read N- to C-terminus: Argininosuccinate lyase (459 aa).

It belongs to the lyase 1 family. Argininosuccinate lyase subfamily.

It is found in the cytoplasm. It catalyses the reaction 2-(N(omega)-L-arginino)succinate = fumarate + L-arginine. The protein operates within amino-acid biosynthesis; L-arginine biosynthesis; L-arginine from L-ornithine and carbamoyl phosphate: step 3/3. The chain is Argininosuccinate lyase from Staphylococcus aureus (strain bovine RF122 / ET3-1).